Here is a 433-residue protein sequence, read N- to C-terminus: E1B 55 kDa protein (433 aa).

Belongs to the adenoviridae E1B 55 kDa protein family. As to quaternary structure, interacts with host PML-4 and PML-5; this interaction promotes efficient subnuclear targeting of E1B-55K to PML nuclear bodies. Interacts with E4-ORF3 protein. Interacts with E4-ORF6 protein.

Its subcellular location is the host nucleus. It is found in the host cytoplasm. Functionally, plays a major role to prevent cellular inhibition of viral genome replication. Assembles an SCF-like E3 ubiquitin ligase complex based on the cellular proteins ELOB, ELOC, CUL5 and RBX1, in cooperation with viral E4orf6. This viral RING-type ligase ubiquitinates cellular substrates and targets them to proteasomal degradation: TP53/p53, LIG4, MRE11-RAD50-NBS1 (MRN) complex, ITGA3, DAXX and BLM. E1B-55K probably acts as the substrate-specific adapter of the SCF-like E3 ubiquitin ligase complex. Degradation of host TP53/p53 activity is essential for preventing E1A-induced TP53 accumulation that would otherwise lead to cell apoptosis and growth arrest. E1B-55K also inactivates TP53 transcription-factor activity by binding its transactivation domain. E1B-55K also functions as a SUMO1 E3 ligase for TP53 which causes the latter to be sequestered in promyelocytic leukemia (PML) nuclear bodies thereby contributing to maximal inhibition of TP53 function. The chain is E1B 55 kDa protein from Murine adenovirus A serotype 1 (MAdV-1).